A 652-amino-acid chain; its full sequence is DNA ligase (652 aa).

NAD(+) is bound by residues 29-33 (DSDYD), 78-79 (SL), and Glu107. Lys109 acts as the N6-AMP-lysine intermediate in catalysis. Positions 130, 164, 278, and 302 each coordinate NAD(+). Zn(2+)-binding residues include Cys395, Cys398, Cys413, and Cys418. Residues 577–652 (NSDAALFGLT…IEDEDWLRQL (76 aa)) form the BRCT domain.

It belongs to the NAD-dependent DNA ligase family. LigA subfamily. The cofactor is Mg(2+). Mn(2+) serves as cofactor.

The enzyme catalyses NAD(+) + (deoxyribonucleotide)n-3'-hydroxyl + 5'-phospho-(deoxyribonucleotide)m = (deoxyribonucleotide)n+m + AMP + beta-nicotinamide D-nucleotide.. Functionally, DNA ligase that catalyzes the formation of phosphodiester linkages between 5'-phosphoryl and 3'-hydroxyl groups in double-stranded DNA using NAD as a coenzyme and as the energy source for the reaction. It is essential for DNA replication and repair of damaged DNA. This Streptococcus pyogenes serotype M1 protein is DNA ligase.